We begin with the raw amino-acid sequence, 133 residues long: S-adenosylmethionine decarboxylase proenzyme (133 aa).

Ser64 (schiff-base intermediate with substrate; via pyruvic acid) is an active-site residue. Residue Ser64 is modified to Pyruvic acid (Ser); by autocatalysis. His69 serves as the catalytic Proton acceptor; for processing activity. Cys84 serves as the catalytic Proton donor; for catalytic activity.

This sequence belongs to the prokaryotic AdoMetDC family. Type 1 subfamily. In terms of assembly, heterotetramer of two alpha and two beta chains arranged as a dimer of alpha/beta heterodimers. The cofactor is pyruvate. Is synthesized initially as an inactive proenzyme. Formation of the active enzyme involves a self-maturation process in which the active site pyruvoyl group is generated from an internal serine residue via an autocatalytic post-translational modification. Two non-identical subunits are generated from the proenzyme in this reaction, and the pyruvate is formed at the N-terminus of the alpha chain, which is derived from the carboxyl end of the proenzyme. The post-translation cleavage follows an unusual pathway, termed non-hydrolytic serinolysis, in which the side chain hydroxyl group of the serine supplies its oxygen atom to form the C-terminus of the beta chain, while the remainder of the serine residue undergoes an oxidative deamination to produce ammonia and the pyruvoyl group blocking the N-terminus of the alpha chain.

The catalysed reaction is S-adenosyl-L-methionine + H(+) = S-adenosyl 3-(methylsulfanyl)propylamine + CO2. The protein operates within amine and polyamine biosynthesis; S-adenosylmethioninamine biosynthesis; S-adenosylmethioninamine from S-adenosyl-L-methionine: step 1/1. Its function is as follows. Catalyzes the decarboxylation of S-adenosylmethionine to S-adenosylmethioninamine (dcAdoMet), the propylamine donor required for the synthesis of the polyamines spermine and spermidine from the diamine putrescine. The sequence is that of S-adenosylmethionine decarboxylase proenzyme from Persephonella marina (strain DSM 14350 / EX-H1).